A 183-amino-acid chain; its full sequence is Threonylcarbamoyl-AMP synthase (183 aa).

The YrdC-like domain occupies 1–183 (MNITQIIEKL…LFTNQLVRQG (183 aa)).

It belongs to the SUA5 family. TsaC subfamily.

It is found in the cytoplasm. The enzyme catalyses L-threonine + hydrogencarbonate + ATP = L-threonylcarbamoyladenylate + diphosphate + H2O. Required for the formation of a threonylcarbamoyl group on adenosine at position 37 (t(6)A37) in tRNAs that read codons beginning with adenine. Catalyzes the conversion of L-threonine, HCO(3)(-)/CO(2) and ATP to give threonylcarbamoyl-AMP (TC-AMP) as the acyladenylate intermediate, with the release of diphosphate. The sequence is that of Threonylcarbamoyl-AMP synthase from Histophilus somni (strain 129Pt) (Haemophilus somnus).